A 164-amino-acid polypeptide reads, in one-letter code: Peptidyl-prolyl cis-trans isomerase A-like 4C (164 aa).

Residues 7–163 (FFDITVDGKP…KKITIADCGQ (157 aa)) enclose the PPIase cyclophilin-type domain.

This sequence belongs to the cyclophilin-type PPIase family. PPIase A subfamily.

Its subcellular location is the cytoplasm. The catalysed reaction is [protein]-peptidylproline (omega=180) = [protein]-peptidylproline (omega=0). PPIases accelerate the folding of proteins. It catalyzes the cis-trans isomerization of proline imidic peptide bonds in oligopeptides. The polypeptide is Peptidyl-prolyl cis-trans isomerase A-like 4C (Homo sapiens (Human)).